We begin with the raw amino-acid sequence, 430 residues long: MDRIRIVGGNALNGIIPISGAKNAALPLMIASLLTSDTLTLENVPHLADVELLLRILGNHGVDIAVNGRRERQSGSYSRTIHFTCRTIVDTNAPYELVSKMRASFWVIGPLLAREGKARVSLPGGCAIGTRPVDLFIDGLRALGATLEIDSGYIEATAPKGGLIGASYTFPKVSVGATHVMLMAASLARGTTVIHNAAREPEVVDLANCLNAMGAKITGQGTATITIEGVTSLSGARHRVLPDRIETGTYAMAVAMTGGDVTLEGTDITLLDTAVEALRRAGAEVSAIEDGIRVIGHGDAIRPVDIVTEPFPGFPTDLQAQFMGLMTRAQGVAHVTETIFENRFMHVQELARLGAKITLSGQTARIEGVQRLRGAPVMATDLRASVSLVIAGLAAEGETLVNRVYHLDRGFERLEEKLTRCGAIVERISD.

22-23 (KN) provides a ligand contact to phosphoenolpyruvate. Arginine 102 serves as a coordination point for UDP-N-acetyl-alpha-D-glucosamine. The Proton donor role is filled by cysteine 126. The residue at position 126 (cysteine 126) is a 2-(S-cysteinyl)pyruvic acid O-phosphothioketal. UDP-N-acetyl-alpha-D-glucosamine is bound by residues 131-135 (RPVDL), 172-175 (KVSV), aspartate 317, and isoleucine 339.

The protein belongs to the EPSP synthase family. MurA subfamily.

It is found in the cytoplasm. It catalyses the reaction phosphoenolpyruvate + UDP-N-acetyl-alpha-D-glucosamine = UDP-N-acetyl-3-O-(1-carboxyvinyl)-alpha-D-glucosamine + phosphate. The protein operates within cell wall biogenesis; peptidoglycan biosynthesis. Cell wall formation. Adds enolpyruvyl to UDP-N-acetylglucosamine. This is UDP-N-acetylglucosamine 1-carboxyvinyltransferase from Allorhizobium ampelinum (strain ATCC BAA-846 / DSM 112012 / S4) (Agrobacterium vitis (strain S4)).